A 418-amino-acid polypeptide reads, in one-letter code: Light-independent protochlorophyllide reductase subunit N (418 aa).

Residues Cys-17, Cys-42, and Cys-103 each coordinate [4Fe-4S] cluster.

It belongs to the BchN/ChlN family. Protochlorophyllide reductase is composed of three subunits; ChlL, ChlN and ChlB. Forms a heterotetramer of two ChlB and two ChlN subunits. [4Fe-4S] cluster is required as a cofactor.

The enzyme catalyses chlorophyllide a + oxidized 2[4Fe-4S]-[ferredoxin] + 2 ADP + 2 phosphate = protochlorophyllide a + reduced 2[4Fe-4S]-[ferredoxin] + 2 ATP + 2 H2O. The protein operates within porphyrin-containing compound metabolism; chlorophyll biosynthesis (light-independent). In terms of biological role, component of the dark-operative protochlorophyllide reductase (DPOR) that uses Mg-ATP and reduced ferredoxin to reduce ring D of protochlorophyllide (Pchlide) to form chlorophyllide a (Chlide). This reaction is light-independent. The NB-protein (ChlN-ChlB) is the catalytic component of the complex. The protein is Light-independent protochlorophyllide reductase subunit N of Prochlorococcus marinus (strain MIT 9303).